The primary structure comprises 331 residues: MFGLRRNAVIGLNLYCGGASLGAGGGSPAGARLVAEEAKARREGGGEAALLPGARVVARPPPVGAEDPDVTASAERRLHKSPGLLAVPPEEMAASAAAAIVSPEEELDGCEPEAIGKRPAVLPLLERVSEAAKSSGADGSLPSTPPPPEEEEDDLYRQSLEIISRYLREQATGSKDSKPLGEAGAAGRRALETLRRVGDGVQRNHETAFQGMLRKLDIKNEGDVKSFSRVMVHVFKDGVTNWGRIVTLISFGAFVAKHLKSVNQESFIEPLAETITDVLVRTKRDWLVKQRGWDGFVEFFHVQDLEGGIRNVLLAFAGVAGVGAGLAYLIR.

Residues 85 to 156 (LAVPPEEMAA…PPEEEEDDLY (72 aa)) form a PEST-like region. Ser102 is subject to Phosphoserine. Lys117 is covalently cross-linked (Glycyl lysine isopeptide (Lys-Gly) (interchain with G-Cter in ubiquitin)). The disordered stretch occupies residues 130-154 (EAAKSSGADGSLPSTPPPPEEEEDD). Ser140 bears the Phosphoserine; by GSK3-alpha and GSK3-beta mark. Residue Ser143 is modified to Phosphoserine. Thr144 bears the Phosphothreonine; by MAPK mark. Residues Lys175 and Lys178 each participate in a glycyl lysine isopeptide (Lys-Gly) (interchain with G-Cter in ubiquitin) cross-link. The BH3 signature appears at 190–204 (ALETLRRVGDGVQRN). Residues 234 to 253 (VFKDGVTNWGRIVTLISFGA) carry the BH1 motif. Positions 285-300 (DWLVKQRGWDGFVEFF) match the BH2 motif. The chain crosses the membrane as a helical span at residues 308 to 330 (GIRNVLLAFAGVAGVGAGLAYLI).

This sequence belongs to the Bcl-2 family. In terms of assembly, interacts with HIF3A isoform 2 (via C-terminus domain). Interacts with BAD, BOK, BIK, BAX, BAK1, and TPT1. Interacts with BBC3, BMF and PMAIP1. Interacts with BOP. Interacts with BCL2L11; this interaction may sequester BCL2L11 and prevent its pro-apoptotic activity. Interacts with GIMAP5 and HSPA8/HSC70; the interaction between HSPA8 and MCL1 is impaired in the absence of GIMAP5. In terms of processing, cleaved by CASP3 during apoptosis, yielding a pro-apoptotic C-terminal fragment. Rapidly degraded in the absence of phosphorylation in the PEST region. Post-translationally, phosphorylated on Ser-140, by GSK3, in response to IL3/interleukin-3 withdrawal. Phosphorylation at Ser-140 induces ubiquitination and proteasomal degradation, abrogating the anti-apoptotic activity. Treatment with taxol or okadaic acid induces phosphorylation on additional sites. In terms of processing, ubiquitinated. Ubiquitination is induced by phosphorylation at Ser-140. Deubiquitinated by USP20; leading to increased stability.

It is found in the membrane. It localises to the cytoplasm. Its subcellular location is the mitochondrion. The protein resides in the nucleus. The protein localises to the nucleoplasm. Involved in the regulation of apoptosis versus cell survival, and in the maintenance of viability but not of proliferation. Mediates its effects by interactions with a number of other regulators of apoptosis. Isoform 2 has antiapoptotic activity. In Mus musculus (Mouse), this protein is Induced myeloid leukemia cell differentiation protein Mcl-1 homolog (Mcl1).